The chain runs to 318 residues: Mitochondrial thiamine pyrophosphate carrier (318 aa).

Solcar repeat units lie at residues 13–106, 116–202, and 214–309; these read ISNV…LTEL, RDFS…LKRA, and NGNF…FCNF. A helical transmembrane segment spans residues 19–39; sequence AVAGSVSGLVTRVLISPLDVI. Ser-51 bears the Phosphoserine mark. The next 4 helical transmembrane spans lie at 87–107, 122–142, 173–193, and 220–240; these read LLSIGYGAVQFLSFEALTELV, FLCGGLSACVATLAVHPVDVL, VFYKGLNPTLIAIFPYAGFQF, and LLCGSGAGVISKTLTYPLDLF. The Substrate recognition motif lies at 241–246; the sequence is KKRLQV. A helical transmembrane segment spans residues 293-313; sequence ALSTGLVFFWYELFCNFFHHM.

This sequence belongs to the mitochondrial carrier (TC 2.A.29) family.

It localises to the mitochondrion membrane. The catalysed reaction is thiamine phosphate(out) + thiamine diphosphate(in) = thiamine phosphate(in) + thiamine diphosphate(out). In terms of biological role, mitochondrial transporter mediating uptake of thiamine diphosphate into mitochondria. It is not clear if the antiporter activity is affected by the membrane potential or by the proton electrochemical gradient. This chain is Mitochondrial thiamine pyrophosphate carrier (SLC25A19), found in Bos taurus (Bovine).